The following is a 461-amino-acid chain: GTPase Der (461 aa).

EngA-type G domains lie at Ile2–Pro166 and Ile199–Ser370. GTP is bound by residues Gly8–Ser15, Asp57–Leu61, Asn118–Asp121, Gly205–Ser212, Asp252–Ile256, and Asn316–Asp319. Residues Lys371–Gly455 enclose the KH-like domain.

It belongs to the TRAFAC class TrmE-Era-EngA-EngB-Septin-like GTPase superfamily. EngA (Der) GTPase family. In terms of assembly, associates with the 50S ribosomal subunit.

In terms of biological role, GTPase that plays an essential role in the late steps of ribosome biogenesis. The polypeptide is GTPase Der (Nautilia profundicola (strain ATCC BAA-1463 / DSM 18972 / AmH)).